The sequence spans 666 residues: Endogenous retrovirus group K member 24 Gag polyprotein (666 aa).

A lipid anchor (N-myristoyl glycine) is attached at Gly-2. The interval 165 to 264 (GKGPELVGPS…APPSRQGSEL (100 aa)) is disordered. Residues 232–247 (GMPPAPQGRAPYPQPP) are compositionally biased toward pro residues. CCHC-type zinc fingers lie at residues 544–561 (GKCY…NCPV) and 580–597 (DLCP…QCRS). A disordered region spans residues 598–641 (KFDKNGQPLSGNEQRGQPQAPQQTGAFPIQPFVPQGFQGQQPPL). Residues 604-622 (QPLSGNEQRGQPQAPQQTG) are compositionally biased toward polar residues. The span at 624–640 (FPIQPFVPQGFQGQQPP) shows a compositional bias: low complexity.

It belongs to the beta type-B retroviral Gag protein family. HERV class-II K(HML-2) gag subfamily. Myristoylation is essential for retroviral assembly. Alteration of the glycine residue leads to a block in the budding of particles and an accumulation of Gag inside the cell. Post-translationally, specific enzymatic cleavages may yield mature proteins.

The protein localises to the cell membrane. The products of the Gag polyproteins of infectious retroviruses perform highly complex orchestrated tasks during the assembly, budding, maturation, and infection stages of the viral replication cycle. During viral assembly, the proteins form membrane associations and self-associations that ultimately result in budding of an immature virion from the infected cell. Gag precursors also function during viral assembly to selectively bind and package two plus strands of genomic RNA. Endogenous Gag proteins may have kept, lost or modified their original function during evolution. This chain is Endogenous retrovirus group K member 24 Gag polyprotein (ERVK-24), found in Homo sapiens (Human).